The sequence spans 192 residues: Lipid A acyltransferase PagP (192 aa).

Positions 1–26 (MTVVNKSFLTILIFFCQILFPLNASA) are cleaved as a signal peptide. Residues His-64, Asp-107, and Ser-108 contribute to the active site.

The protein belongs to the lipid A palmitoyltransferase family. Homodimer.

The protein localises to the cell outer membrane. It carries out the reaction a lipid A + a 1,2-diacyl-sn-glycero-3-phosphocholine = a hepta-acyl lipid A + a 2-acyl-sn-glycero-3-phosphocholine. It catalyses the reaction a lipid IVA + a 1,2-diacyl-sn-glycero-3-phosphocholine = a lipid IVB + a 2-acyl-sn-glycero-3-phosphocholine. The catalysed reaction is a lipid IIA + a 1,2-diacyl-sn-glycero-3-phosphocholine = a lipid IIB + a 2-acyl-sn-glycero-3-phosphocholine. Functionally, transfers a fatty acid residue from the sn-1 position of a phospholipid to the N-linked hydroxyfatty acid chain on the proximal unit of lipid A or its precursors. This Cronobacter sakazakii (strain ATCC BAA-894) (Enterobacter sakazakii) protein is Lipid A acyltransferase PagP.